A 338-amino-acid chain; its full sequence is Elongation factor Ts, mitochondrial (338 aa).

The transit peptide at 1–42 directs the protein to the mitochondrion; the sequence is MSPSIAMFTLTPNARALASKTSKMDLIKNLRERTGAPIVDVK.

Belongs to the EF-Ts family.

It is found in the mitochondrion. Functionally, associates with the EF-Tu.GDP complex and induces the exchange of GDP to GTP. It remains bound to the aminoacyl-tRNA.EF-Tu.GTP complex up to the GTP hydrolysis stage on the ribosome. This Ostreococcus tauri protein is Elongation factor Ts, mitochondrial.